The sequence spans 173 residues: U4/U6.U5 small nuclear ribonucleoprotein component snu23 (173 aa).

The segment at 55–85 adopts a Matrin-type zinc-finger fold; that stretch reads WYCEACNETYKDSLSWLDHLNSTQHLRKTRT. Positions 119–149 form a coiled coil; sequence SLKERVERYHQELEAKKLRRKQKKVNKEKNS.

As to quaternary structure, component of the 25S U4/U6.U5 tri-snRNP particle, a subcomplex of the spliceosome.

It is found in the cytoplasm. It localises to the cytoskeleton. The protein localises to the microtubule organizing center. Its subcellular location is the spindle pole body. The protein resides in the nucleus. The sequence is that of U4/U6.U5 small nuclear ribonucleoprotein component snu23 (snu23) from Schizosaccharomyces pombe (strain 972 / ATCC 24843) (Fission yeast).